We begin with the raw amino-acid sequence, 172 residues long: Peptidyl-prolyl cis-trans isomerase (172 aa).

In terms of domain architecture, PPIase cyclophilin-type spans 7 to 170 (FFDMAIAGNP…RPVTIADCGQ (164 aa)).

Belongs to the cyclophilin-type PPIase family. In terms of tissue distribution, expressed in meristematic tissues, with higher levels in nodules.

The protein resides in the cytoplasm. It carries out the reaction [protein]-peptidylproline (omega=180) = [protein]-peptidylproline (omega=0). Its activity is regulated as follows. Binds cyclosporin A (CsA). CsA mediates some of its effects via an inhibitory action on PPIase. Functionally, PPIases accelerate the folding of proteins. It catalyzes the cis-trans isomerization of proline imidic peptide bonds in oligopeptides. The polypeptide is Peptidyl-prolyl cis-trans isomerase (Lupinus luteus (European yellow lupine)).